Here is a 353-residue protein sequence, read N- to C-terminus: Rhodopsin (353 aa).

At Met-1–Ala-36 the chain is on the extracellular side. N-linked (GlcNAc...) asparagine glycans are attached at residues Asn-2 and Asn-15. The chain crosses the membrane as a helical span at residues Tyr-37–Val-61. Topologically, residues Thr-62–Asn-73 are cytoplasmic. The chain crosses the membrane as a helical span at residues Tyr-74 to Tyr-96. Residues Thr-97 to Cys-110 are Extracellular-facing. Cys-110 and Cys-187 form a disulfide bridge. The helical transmembrane segment at Asn-111–Ile-133 threads the bilayer. The 'Ionic lock' involved in activated form stabilization motif lies at Glu-134 to Trp-136. Residues Glu-134–His-152 lie on the Cytoplasmic side of the membrane. A helical membrane pass occupies residues Ala-153–Val-173. Over Gly-174 to Ser-202 the chain is Extracellular. N-linked (GlcNAc...) asparagine glycosylation is present at Asn-200. A helical membrane pass occupies residues Phe-203–Gly-224. At Arg-225–Arg-252 the chain is on the cytoplasmic side. Residues Met-253–Tyr-274 traverse the membrane as a helical segment. Residues Ile-275–Leu-286 are Extracellular-facing. A helical membrane pass occupies residues Phe-287 to Cys-308. Lys-296 carries the post-translational modification N6-(retinylidene)lysine. Residues Met-309 to Ala-353 are Cytoplasmic-facing. 2 S-palmitoyl cysteine lipidation sites follow: Cys-322 and Cys-323. The tract at residues Glu-330 to Ala-353 is disordered. The span at Ala-334–Ala-353 shows a compositional bias: low complexity.

This sequence belongs to the G-protein coupled receptor 1 family. Opsin subfamily. In terms of processing, phosphorylated on some or all of the serine and threonine residues present in the C-terminal region. Contains one covalently linked retinal chromophore.

The protein localises to the membrane. Its subcellular location is the cell projection. The protein resides in the cilium. It is found in the photoreceptor outer segment. Functionally, photoreceptor required for image-forming vision at low light intensity. While most salt water fish species use retinal as chromophore, most freshwater fish use 3-dehydroretinal, or a mixture of retinal and 3-dehydroretinal. Light-induced isomerization of 11-cis to all-trans retinal triggers a conformational change that activates signaling via G-proteins. Subsequent receptor phosphorylation mediates displacement of the bound G-protein alpha subunit by arrestin and terminates signaling. This Chelon labrosus (Thicklip grey mullet) protein is Rhodopsin (rho).